We begin with the raw amino-acid sequence, 150 residues long: 3-hydroxyacyl-[acyl-carrier-protein] dehydratase FabZ (150 aa).

Residue histidine 54 is part of the active site.

Belongs to the thioester dehydratase family. FabZ subfamily.

It localises to the cytoplasm. It catalyses the reaction a (3R)-hydroxyacyl-[ACP] = a (2E)-enoyl-[ACP] + H2O. In terms of biological role, involved in unsaturated fatty acids biosynthesis. Catalyzes the dehydration of short chain beta-hydroxyacyl-ACPs and long chain saturated and unsaturated beta-hydroxyacyl-ACPs. The protein is 3-hydroxyacyl-[acyl-carrier-protein] dehydratase FabZ of Vibrio vulnificus (strain CMCP6).